The following is a 932-amino-acid chain: Glycine dehydrogenase (decarboxylating) (932 aa).

An N6-(pyridoxal phosphate)lysine modification is found at K685.

Belongs to the GcvP family. The glycine cleavage system is composed of four proteins: P, T, L and H. Pyridoxal 5'-phosphate is required as a cofactor.

The enzyme catalyses N(6)-[(R)-lipoyl]-L-lysyl-[glycine-cleavage complex H protein] + glycine + H(+) = N(6)-[(R)-S(8)-aminomethyldihydrolipoyl]-L-lysyl-[glycine-cleavage complex H protein] + CO2. Functionally, the glycine cleavage system catalyzes the degradation of glycine. The P protein binds the alpha-amino group of glycine through its pyridoxal phosphate cofactor; CO(2) is released and the remaining methylamine moiety is then transferred to the lipoamide cofactor of the H protein. The polypeptide is Glycine dehydrogenase (decarboxylating) (Brucella melitensis biotype 2 (strain ATCC 23457)).